Here is a 206-residue protein sequence, read N- to C-terminus: Heterochromatin protein 1 (206 aa).

Disordered regions lie at residues 1–24 (MGKKIDNPESSAKVSDAEEEEEEY) and 47–145 (GYPE…GFDR). A phosphoserine mark is found at serine 11 and serine 15. Residues 24–82 (YAVEKIIDRRVRKGKVEYYLKWKGYPETENTWEPENNLDCQDLIQQYEASRKDEEKSAA) enclose the Chromo 1 domain. Residues 50–60 (ETENTWEPENN) are compositionally biased toward low complexity. Residues 72-98 (ASRKDEEKSAASKKDRPSSSAKAKETQ) show a composition bias toward basic and acidic residues. A binds to Su(var)39 region spans residues 95 to 206 (KETQGRASSS…RLSWYSDNED (112 aa)). Phosphoserine is present on residues serine 102, serine 103, and serine 113. Residues threonine 127, threonine 128, and threonine 134 each carry the phosphothreonine modification. Residues 147-205 (LEAEKILGASDNNGRLTFLIQFKGVDQAEMVPSSVANEKIPRMVIHFYEERLSWYSDNE) form the Chromo 2 domain.

Homodimer. Probably associates with Su(var)3-9. Interacts with Mcm10. Interacts (via chromoshadow domain) with piwi (via N-terminal region). Interacts with Rrp6. Associates with and may be part of the HipHop-HOAP telomere capping complex but is not required for its stability or telomere localization. Interacts (via the chromo domain 2 (chromoshadow domain) and the hinge region between chromo domains 1 and 2) with cav/HOAP (via C-terminus); the interaction is direct. Each molecule of cav/HOAP interacts with 2 molecules of Su(var)205/HP1. Interacts with HipHop (via N-terminus). Interacts with moi/modigliani; the interaction is direct. Interacts (via chromo domain 1) with His3/histone 3 (via N-terminal tail methylated at 'Lys-10'); the interaction is direct. As to expression, salivary gland (at protein level).

The protein resides in the nucleus. Its subcellular location is the nucleoplasm. It localises to the chromosome. The protein localises to the telomere. Structural component of heterochromatin, involved in gene repression and the modification of position-effect-variegation. Recognizes and binds histone H3 tails methylated at 'Lys-9', leading to epigenetic repression. Stabilizes chromatin-associated RNAs probably by binding to them and thereby preventing their degradation. Associates with, and may be a part of, the HipHop-HOAP complex that recruits the MTV complex to form the terminin telomere-capping complex, which binds to chromosome ends in a sequence-independent manner and prevents telomere fusion. Telomere capping is independent of the origin recognition complex (ORC). This chain is Heterochromatin protein 1, found in Drosophila melanogaster (Fruit fly).